The chain runs to 573 residues: Ribosomal RNA-processing protein 9 (573 aa).

The disordered stretch occupies residues 1-63 (MSDVTQQKKR…FEGENPADKR (63 aa)). Serine 2 carries the post-translational modification N-acetylserine. A compositionally biased stretch (acidic residues) spans 25–58 (DEEITDPSSNEDEQLEVSDEEDALESEEEFEGEN). Positions 32–106 (SSNEDEQLEV…KERTIDEYNN (75 aa)) form a coiled coil. At serine 50 the chain carries Phosphoserine. WD repeat units follow at residues 234–273 (GHYD…PVKV), 278–317 (DRRG…QLEI), 320–359 (GHHD…RLTF), 397–435 (FCEG…PIFT), 471–509 (QPFW…RSFE), and 516–562 (GAKG…ARNG).

Belongs to the WD repeat RRP9 family. Interacts with UTP25. Component of the ribosomal small subunit (SSU) processome composed of at least 40 protein subunits and snoRNA U3.

Its subcellular location is the nucleus. The protein localises to the nucleolus. Functionally, involved in nucleolar processing of pre-18S ribosomal RNA. Required for efficient pre-rRNA cleavage at sites A0, A1 and A2, and biosynthesis of 18S rRNA. The polypeptide is Ribosomal RNA-processing protein 9 (RRP9) (Saccharomyces cerevisiae (strain ATCC 204508 / S288c) (Baker's yeast)).